The sequence spans 339 residues: Methionyl-tRNA formyltransferase (339 aa).

110–113 (SLLP) provides a ligand contact to (6S)-5,6,7,8-tetrahydrofolate.

It belongs to the Fmt family.

The enzyme catalyses L-methionyl-tRNA(fMet) + (6R)-10-formyltetrahydrofolate = N-formyl-L-methionyl-tRNA(fMet) + (6S)-5,6,7,8-tetrahydrofolate + H(+). Functionally, attaches a formyl group to the free amino group of methionyl-tRNA(fMet). The formyl group appears to play a dual role in the initiator identity of N-formylmethionyl-tRNA by promoting its recognition by IF2 and preventing the misappropriation of this tRNA by the elongation apparatus. This Prochlorococcus marinus (strain MIT 9211) protein is Methionyl-tRNA formyltransferase.